A 261-amino-acid polypeptide reads, in one-letter code: 4-hydroxy-tetrahydrodipicolinate reductase (261 aa).

Residues Gly11–Met16, Gly96–Thr98, and Ala122–Phe125 contribute to the NAD(+) site. His152 functions as the Proton donor/acceptor in the catalytic mechanism. His153 is a (S)-2,3,4,5-tetrahydrodipicolinate binding site. The active-site Proton donor is the Lys156. Gly162–Thr163 contributes to the (S)-2,3,4,5-tetrahydrodipicolinate binding site.

The protein belongs to the DapB family.

It is found in the cytoplasm. The catalysed reaction is (S)-2,3,4,5-tetrahydrodipicolinate + NAD(+) + H2O = (2S,4S)-4-hydroxy-2,3,4,5-tetrahydrodipicolinate + NADH + H(+). The enzyme catalyses (S)-2,3,4,5-tetrahydrodipicolinate + NADP(+) + H2O = (2S,4S)-4-hydroxy-2,3,4,5-tetrahydrodipicolinate + NADPH + H(+). Its pathway is amino-acid biosynthesis; L-lysine biosynthesis via DAP pathway; (S)-tetrahydrodipicolinate from L-aspartate: step 4/4. In terms of biological role, catalyzes the conversion of 4-hydroxy-tetrahydrodipicolinate (HTPA) to tetrahydrodipicolinate. The polypeptide is 4-hydroxy-tetrahydrodipicolinate reductase (Lactobacillus acidophilus (strain ATCC 700396 / NCK56 / N2 / NCFM)).